Here is a 643-residue protein sequence, read N- to C-terminus: Threonine--tRNA ligase (643 aa).

The 62-residue stretch at 3–64 (DMINITFPDG…QEDGAVEIIT (62 aa)) folds into the TGS domain. The tract at residues 245–542 (DHRKLGKELK…LIEEHKGALP (298 aa)) is catalytic. Cys-338, His-389, and His-519 together coordinate Zn(2+).

Belongs to the class-II aminoacyl-tRNA synthetase family. Homodimer. It depends on Zn(2+) as a cofactor.

The protein localises to the cytoplasm. It carries out the reaction tRNA(Thr) + L-threonine + ATP = L-threonyl-tRNA(Thr) + AMP + diphosphate + H(+). Its function is as follows. Catalyzes the attachment of threonine to tRNA(Thr) in a two-step reaction: L-threonine is first activated by ATP to form Thr-AMP and then transferred to the acceptor end of tRNA(Thr). Also edits incorrectly charged L-seryl-tRNA(Thr). The polypeptide is Threonine--tRNA ligase (Bacillus velezensis (strain DSM 23117 / BGSC 10A6 / LMG 26770 / FZB42) (Bacillus amyloliquefaciens subsp. plantarum)).